The chain runs to 96 residues: Toxin ParE1 (96 aa).

This sequence belongs to the RelE toxin family. As to quaternary structure, forms a ParD1(2)-ParE1(2) heterotetramer.

In terms of biological role, toxic component of a type II toxin-antitoxin (TA) system. Its toxic effect is neutralized by coexpression with cognate antitoxin ParD1 but no other ParD or RelB antitoxin. Low levels of wild-type toxin in the absence of antitoxin decreases the rate of cell growth, and results in death or loss of colony formation abilities and greatly elongated cells. Low levels of a mutant missing the last 4 residues leads to loss of cell division while cell elongation continues. The chain is Toxin ParE1 (parE1) from Caulobacter vibrioides (strain ATCC 19089 / CIP 103742 / CB 15) (Caulobacter crescentus).